We begin with the raw amino-acid sequence, 441 residues long: Malate dehydrogenase [NADP], chloroplastic (441 aa).

The N-terminal 51 residues, 1–51 (MAVAELSPSYKTQLKTCQQLSSSLSTRLSDHRKFSLRLLPRPVSVRGGIRC), are a transit peptide targeting the chloroplast. C75 and C80 form a disulfide bridge. An NADP(+)-binding site is contributed by 104–110 (GAAGMIS). 2 residues coordinate substrate: R185 and R191. N198 contacts NADP(+). Q205 is a binding site for NAD(+). 222 to 224 (VGN) provides a ligand contact to NADP(+). Residues N224 and R255 each coordinate substrate. The active-site Proton acceptor is H280. A disulfide bond links C416 and C428.

It belongs to the LDH/MDH superfamily. MDH type 2 family. As to quaternary structure, homodimer.

The protein localises to the plastid. Its subcellular location is the chloroplast. The enzyme catalyses (S)-malate + NADP(+) = oxaloacetate + NADPH + H(+). With respect to regulation, chloroplast NADP-MDH is activated upon illumination. In order to be enzymatically active, disulfide bridges on the protein must be reduced by thioredoxin which receives electrons from ferredoxin and the electron transport system of photosynthesis. Its function is as follows. The chloroplastic, NADP-dependent form is essential for the photosynthesis C4 cycle, which allows plants to circumvent the problem of photorespiration. In C4 plants, NADP-MDH activity acts to convert oxaloacetate to malate in chloroplasts of mesophyll cells for transport to the bundle sheath cells. This chain is Malate dehydrogenase [NADP], chloroplastic (MDH1), found in Mesembryanthemum crystallinum (Common ice plant).